The sequence spans 1802 residues: Non-reducing polyketide synthase nscA (1802 aa).

The segment at aspartate 27 to histidine 261 is N-terminal acylcarrier protein transacylase domain (SAT). Residues serine 396 to aspartate 829 enclose the Ketosynthase family 3 (KS3) domain. Active-site for beta-ketoacyl synthase activity residues include cysteine 569, histidine 704, and histidine 747. The malonyl-CoA:ACP transacylase (MAT) domain stretch occupies residues phenylalanine 935–arginine 1235. The tract at residues threonine 1322 to proline 1641 is product template (PT) domain. The tract at residues histidine 1326–alanine 1462 is N-terminal hotdog fold. The PKS/mFAS DH domain occupies histidine 1326–aspartate 1636. Catalysis depends on histidine 1358, which acts as the Proton acceptor; for dehydratase activity. The C-terminal hotdog fold stretch occupies residues alanine 1490–aspartate 1636. The active-site Proton donor; for dehydratase activity is aspartate 1547. The interval leucine 1699–serine 1729 is disordered. A compositionally biased stretch (low complexity) spans threonine 1702–proline 1713. The 78-residue stretch at proline 1725 to cysteine 1802 folds into the Carrier domain. Position 1762 is an O-(pantetheine 4'-phosphoryl)serine (serine 1762).

It depends on pantetheine 4'-phosphate as a cofactor.

The protein operates within secondary metabolite biosynthesis. In terms of biological role, non-reducing polyketide synthase; part of the gene cluster that mediates the biosynthesis of neosartoricin B, a prenylated anthracenone that probably exhibits T-cell antiproliferative activity, suggestive of a physiological role as an immunosuppressive agent. The non-reducing polyketide synthase nscA probably synthesizes and cyclizes the decaketide backbone. The hydrolase nscB then mediates the product release through hydrolysis followed by spontaneous decarboxylation. The prenyltransferase nscD catalyzes the addition of the dimethylallyl group to the aromatic C5. The FAD-dependent monooxygenase nscC is then responsible for the stereospecific hydroxylation at C2. Neosartoricin B can be converted into two additional compounds neosartoricins C and D. Neosartoricin C is a spirocyclic compound that is cyclized through the attack of C3 hydroxyl on C14, followed by dehydration. On the other hand, neosartoricin D is a further cyclized compound in which attack of C2 on C14 in neosartoricin C results in the formation of the acetal-containing dioxabicyclo-octanone ring. Both of these compounds are novel and possibly represent related metabolites of the gene cluster. This is Non-reducing polyketide synthase nscA from Trichophyton tonsurans (strain CBS 112818) (Scalp ringworm fungus).